A 65-amino-acid polypeptide reads, in one-letter code: Cecropin (65 aa).

An N-terminal signal peptide occupies residues 1-23 (MNFVKVLFFISACILIMLSAVSG).

Belongs to the cecropin family.

It localises to the secreted. Has antibacterial activity. The polypeptide is Cecropin (LOC113514368) (Galleria mellonella (Greater wax moth)).